The chain runs to 140 residues: 3-hydroxyacyl-[acyl-carrier-protein] dehydratase FabZ (140 aa).

Residue histidine 47 is part of the active site.

Belongs to the thioester dehydratase family. FabZ subfamily.

Its subcellular location is the cytoplasm. It catalyses the reaction a (3R)-hydroxyacyl-[ACP] = a (2E)-enoyl-[ACP] + H2O. In terms of biological role, involved in unsaturated fatty acids biosynthesis. Catalyzes the dehydration of short chain beta-hydroxyacyl-ACPs and long chain saturated and unsaturated beta-hydroxyacyl-ACPs. The protein is 3-hydroxyacyl-[acyl-carrier-protein] dehydratase FabZ of Streptococcus agalactiae serotype III (strain NEM316).